We begin with the raw amino-acid sequence, 55 residues long: Large ribosomal subunit protein bL33 (55 aa).

Belongs to the bacterial ribosomal protein bL33 family.

In Bartonella henselae (strain ATCC 49882 / DSM 28221 / CCUG 30454 / Houston 1) (Rochalimaea henselae), this protein is Large ribosomal subunit protein bL33.